Consider the following 160-residue polypeptide: SsrA-binding protein (160 aa).

The protein belongs to the SmpB family.

Its subcellular location is the cytoplasm. Its function is as follows. Required for rescue of stalled ribosomes mediated by trans-translation. Binds to transfer-messenger RNA (tmRNA), required for stable association of tmRNA with ribosomes. tmRNA and SmpB together mimic tRNA shape, replacing the anticodon stem-loop with SmpB. tmRNA is encoded by the ssrA gene; the 2 termini fold to resemble tRNA(Ala) and it encodes a 'tag peptide', a short internal open reading frame. During trans-translation Ala-aminoacylated tmRNA acts like a tRNA, entering the A-site of stalled ribosomes, displacing the stalled mRNA. The ribosome then switches to translate the ORF on the tmRNA; the nascent peptide is terminated with the 'tag peptide' encoded by the tmRNA and targeted for degradation. The ribosome is freed to recommence translation, which seems to be the essential function of trans-translation. This is SsrA-binding protein from Actinobacillus succinogenes (strain ATCC 55618 / DSM 22257 / CCUG 43843 / 130Z).